A 405-amino-acid polypeptide reads, in one-letter code: SPbeta prophage-derived uncharacterized protein YomR (405 aa).

A coiled-coil region spans residues 9 to 36 (QLKQNNIQINSLRGSNDRAEKHMLEHEQ).

This chain is SPbeta prophage-derived uncharacterized protein YomR (yomR), found in Bacillus subtilis (strain 168).